Here is a 466-residue protein sequence, read N- to C-terminus: Cysteine--tRNA ligase (466 aa).

A Zn(2+)-binding site is contributed by C28. The 'HIGH' region signature appears at 30-40 (PTVYNYIHIGN). Positions 208, 233, and 237 each coordinate Zn(2+). A 'KMSKS' region motif is present at residues 265-269 (KMSKS). K268 provides a ligand contact to ATP.

This sequence belongs to the class-I aminoacyl-tRNA synthetase family. Monomer. Zn(2+) serves as cofactor.

The protein resides in the cytoplasm. It catalyses the reaction tRNA(Cys) + L-cysteine + ATP = L-cysteinyl-tRNA(Cys) + AMP + diphosphate. The chain is Cysteine--tRNA ligase from Staphylococcus aureus (strain Mu3 / ATCC 700698).